Here is a 324-residue protein sequence, read N- to C-terminus: ATP-dependent 6-phosphofructokinase (324 aa).

Gly15 is a binding site for ATP. 25 to 29 lines the ADP pocket; sequence RGVVR. ATP is bound by residues 76-77 and 106-109; these read RF and GDGS. Asp107 is a Mg(2+) binding site. Residue 130-132 coordinates substrate; sequence TID. Residue Asp132 is the Proton acceptor of the active site. Residue Arg159 coordinates ADP. Substrate contacts are provided by residues Arg167 and 174–176; that span reads MGR. ADP is bound by residues 190-192, Lys216, and 218-220; these read GCE and KRH. Residues Glu227, Arg248, and 254–257 contribute to the substrate site; that span reads HIQR.

Belongs to the phosphofructokinase type A (PFKA) family. ATP-dependent PFK group I subfamily. Prokaryotic clade 'B1' sub-subfamily. Homotetramer. Mg(2+) is required as a cofactor.

Its subcellular location is the cytoplasm. It catalyses the reaction beta-D-fructose 6-phosphate + ATP = beta-D-fructose 1,6-bisphosphate + ADP + H(+). The protein operates within carbohydrate degradation; glycolysis; D-glyceraldehyde 3-phosphate and glycerone phosphate from D-glucose: step 3/4. Allosterically activated by ADP and other diphosphonucleosides, and allosterically inhibited by phosphoenolpyruvate. Functionally, catalyzes the phosphorylation of D-fructose 6-phosphate to fructose 1,6-bisphosphate by ATP, the first committing step of glycolysis. The chain is ATP-dependent 6-phosphofructokinase from Actinobacillus pleuropneumoniae serotype 5b (strain L20).